The following is a 166-amino-acid chain: Small ribosomal subunit protein uS4 (166 aa).

The 63-residue stretch at arginine 102 to glutamate 164 folds into the S4 RNA-binding domain.

This sequence belongs to the universal ribosomal protein uS4 family. Part of the 30S ribosomal subunit. Contacts protein S5. The interaction surface between S4 and S5 is involved in control of translational fidelity.

In terms of biological role, one of the primary rRNA binding proteins, it binds directly to 16S rRNA where it nucleates assembly of the body of the 30S subunit. With S5 and S12 plays an important role in translational accuracy. This is Small ribosomal subunit protein uS4 from Korarchaeum cryptofilum (strain OPF8).